The chain runs to 124 residues: UPF0342 protein DSY2926 (124 aa).

Belongs to the UPF0342 family.

This is UPF0342 protein DSY2926 from Desulfitobacterium hafniense (strain Y51).